A 624-amino-acid polypeptide reads, in one-letter code: Phosphomethylpyrimidine synthase (624 aa).

The segment at 75-99 (SPWIESRGDTESYTGRTPFALDDGL) is disordered. Residues Asn226, Met255, Tyr284, His320, 340-342 (SRG), 381-384 (DGLR), and Glu420 each bind substrate. His424 contacts Zn(2+). Tyr447 provides a ligand contact to substrate. His488 provides a ligand contact to Zn(2+). Residues Cys568, Cys571, and Cys576 each contribute to the [4Fe-4S] cluster site.

This sequence belongs to the ThiC family. In terms of assembly, homodimer. [4Fe-4S] cluster serves as cofactor.

The catalysed reaction is 5-amino-1-(5-phospho-beta-D-ribosyl)imidazole + S-adenosyl-L-methionine = 4-amino-2-methyl-5-(phosphooxymethyl)pyrimidine + CO + 5'-deoxyadenosine + formate + L-methionine + 3 H(+). It functions in the pathway cofactor biosynthesis; thiamine diphosphate biosynthesis. In terms of biological role, catalyzes the synthesis of the hydroxymethylpyrimidine phosphate (HMP-P) moiety of thiamine from aminoimidazole ribotide (AIR) in a radical S-adenosyl-L-methionine (SAM)-dependent reaction. The chain is Phosphomethylpyrimidine synthase from Albidiferax ferrireducens (strain ATCC BAA-621 / DSM 15236 / T118) (Rhodoferax ferrireducens).